We begin with the raw amino-acid sequence, 273 residues long: Formamidopyrimidine-DNA glycosylase (273 aa).

Pro-2 serves as the catalytic Schiff-base intermediate with DNA. Glu-3 serves as the catalytic Proton donor. The Proton donor; for beta-elimination activity role is filled by Lys-58. The DNA site is built by His-92, Arg-111, and Lys-153. An FPG-type zinc finger spans residues 238 to 272 (MVYARDGQECLSCSSSIIKTKHSGRSTFYCKSCQK). Arg-262 acts as the Proton donor; for delta-elimination activity in catalysis.

The protein belongs to the FPG family. As to quaternary structure, monomer. Zn(2+) is required as a cofactor.

The enzyme catalyses Hydrolysis of DNA containing ring-opened 7-methylguanine residues, releasing 2,6-diamino-4-hydroxy-5-(N-methyl)formamidopyrimidine.. It carries out the reaction 2'-deoxyribonucleotide-(2'-deoxyribose 5'-phosphate)-2'-deoxyribonucleotide-DNA = a 3'-end 2'-deoxyribonucleotide-(2,3-dehydro-2,3-deoxyribose 5'-phosphate)-DNA + a 5'-end 5'-phospho-2'-deoxyribonucleoside-DNA + H(+). Its function is as follows. Involved in base excision repair of DNA damaged by oxidation or by mutagenic agents. Acts as a DNA glycosylase that recognizes and removes damaged bases. Has a preference for oxidized purines, such as 7,8-dihydro-8-oxoguanine (8-oxoG). Has AP (apurinic/apyrimidinic) lyase activity and introduces nicks in the DNA strand. Cleaves the DNA backbone by beta-delta elimination to generate a single-strand break at the site of the removed base with both 3'- and 5'-phosphates. In Rickettsia bellii (strain OSU 85-389), this protein is Formamidopyrimidine-DNA glycosylase.